The sequence spans 241 residues: Phycocyanobilin:ferredoxin oxidoreductase (241 aa).

The protein belongs to the HY2 family.

The enzyme catalyses (2R,3Z)-phycocyanobilin + 4 oxidized [2Fe-2S]-[ferredoxin] = biliverdin IXalpha + 4 reduced [2Fe-2S]-[ferredoxin] + 4 H(+). Its function is as follows. Catalyzes the four-electron reduction of biliverdin IX-alpha (2-electron reduction at both the A and D rings); the reaction proceeds via an isolatable 2-electron intermediate, 181,182-dihydrobiliverdin. The sequence is that of Phycocyanobilin:ferredoxin oxidoreductase from Prochlorococcus marinus (strain MIT 9515).